A 332-amino-acid polypeptide reads, in one-letter code: 2,3-bisphosphoglycerate-dependent phosphoglycerate mutase 2 (332 aa).

The N-terminal 48 residues, 1–48 (MATSTTMSHQAIGSVVSQRPFKASQFLKEPLNNVPMKFRQKRFKIEAT), are a transit peptide targeting the chloroplast. Substrate contacts are provided by residues 85-92 (RHGESLWN), 98-99 (TG), Arg135, 189-192 (ERMY), Lys200, 216-217 (RR), and 260-261 (GN). Catalysis depends on His86, which acts as the Tele-phosphohistidine intermediate. Glu189 functions as the Proton donor/acceptor in the catalytic mechanism.

This sequence belongs to the phosphoglycerate mutase family. BPG-dependent PGAM subfamily.

The protein resides in the plastid. It localises to the chloroplast. It catalyses the reaction (2R)-2-phosphoglycerate = (2R)-3-phosphoglycerate. It participates in carbohydrate degradation; glycolysis; pyruvate from D-glyceraldehyde 3-phosphate: step 3/5. In terms of biological role, catalyzes the interconversion of 2-phosphoglycerate and 3-phosphoglycerate. The polypeptide is 2,3-bisphosphoglycerate-dependent phosphoglycerate mutase 2 (Arabidopsis thaliana (Mouse-ear cress)).